A 260-amino-acid chain; its full sequence is Thiazole synthase (260 aa).

Residue Lys96 is the Schiff-base intermediate with DXP of the active site. Residues Gly157, 184–185 (AG), and 206–207 (NT) contribute to the 1-deoxy-D-xylulose 5-phosphate site.

Belongs to the ThiG family. In terms of assembly, homotetramer. Forms heterodimers with either ThiH or ThiS.

The protein resides in the cytoplasm. The catalysed reaction is [ThiS sulfur-carrier protein]-C-terminal-Gly-aminoethanethioate + 2-iminoacetate + 1-deoxy-D-xylulose 5-phosphate = [ThiS sulfur-carrier protein]-C-terminal Gly-Gly + 2-[(2R,5Z)-2-carboxy-4-methylthiazol-5(2H)-ylidene]ethyl phosphate + 2 H2O + H(+). It participates in cofactor biosynthesis; thiamine diphosphate biosynthesis. Its function is as follows. Catalyzes the rearrangement of 1-deoxy-D-xylulose 5-phosphate (DXP) to produce the thiazole phosphate moiety of thiamine. Sulfur is provided by the thiocarboxylate moiety of the carrier protein ThiS. In vitro, sulfur can be provided by H(2)S. The chain is Thiazole synthase from Rhodopseudomonas palustris (strain BisB18).